Here is a 557-residue protein sequence, read N- to C-terminus: Membrane protein insertase YidC (557 aa).

The chain crosses the membrane as a helical span at residues 3-23 (NLRPVLYLSMLLVLFLIWQAW). The disordered stretch occupies residues 34-60 (APGAQEQVMDRDGVPAPPQDVPDAPVS). Transmembrane regions (helical) follow at residues 366-386 (VVGN…LVFY), 436-456 (LGGC…YWVL), 480-500 (YFIL…LNPA), and 514-534 (PFVF…YWFV).

The protein belongs to the OXA1/ALB3/YidC family. Type 1 subfamily. As to quaternary structure, interacts with the Sec translocase complex via SecD. Specifically interacts with transmembrane segments of nascent integral membrane proteins during membrane integration.

The protein localises to the cell inner membrane. Required for the insertion and/or proper folding and/or complex formation of integral membrane proteins into the membrane. Involved in integration of membrane proteins that insert both dependently and independently of the Sec translocase complex, as well as at least some lipoproteins. Aids folding of multispanning membrane proteins. The chain is Membrane protein insertase YidC from Thioalkalivibrio sulfidiphilus (strain HL-EbGR7).